Consider the following 102-residue polypeptide: Small ribosomal subunit protein uS17 (102 aa).

Polar residues predominate over residues 1 to 15 (MTDETASQEASQSTD). The interval 1–20 (MTDETASQEASQSTDAAAPA) is disordered.

Belongs to the universal ribosomal protein uS17 family. In terms of assembly, part of the 30S ribosomal subunit.

Functionally, one of the primary rRNA binding proteins, it binds specifically to the 5'-end of 16S ribosomal RNA. This chain is Small ribosomal subunit protein uS17, found in Frankia casuarinae (strain DSM 45818 / CECT 9043 / HFP020203 / CcI3).